A 479-amino-acid polypeptide reads, in one-letter code: Ribulose bisphosphate carboxylase large chain (479 aa).

The propeptide occupies 1–2; the sequence is MS. N123 and T173 together coordinate substrate. K175 (proton acceptor) is an active-site residue. K177 provides a ligand contact to substrate. 3 residues coordinate Mg(2+): K201, D203, and E204. Position 201 is an N6-carboxylysine (K201). S208 bears the Phosphoserine mark. H294 serves as the catalytic Proton acceptor. Residues R295 and H327 each coordinate substrate. Phosphothreonine is present on T330. S379 serves as a coordination point for substrate.

Belongs to the RuBisCO large chain family. Type I subfamily. In terms of assembly, heterohexadecamer of 8 large chains and 8 small chains; disulfide-linked. The disulfide link is formed within the large subunit homodimers. Requires Mg(2+) as cofactor. Post-translationally, the disulfide bond which can form in the large chain dimeric partners within the hexadecamer appears to be associated with oxidative stress and protein turnover.

The protein localises to the plastid. It is found in the chloroplast. The enzyme catalyses 2 (2R)-3-phosphoglycerate + 2 H(+) = D-ribulose 1,5-bisphosphate + CO2 + H2O. It catalyses the reaction D-ribulose 1,5-bisphosphate + O2 = 2-phosphoglycolate + (2R)-3-phosphoglycerate + 2 H(+). Its function is as follows. RuBisCO catalyzes two reactions: the carboxylation of D-ribulose 1,5-bisphosphate, the primary event in carbon dioxide fixation, as well as the oxidative fragmentation of the pentose substrate in the photorespiration process. Both reactions occur simultaneously and in competition at the same active site. This chain is Ribulose bisphosphate carboxylase large chain, found in Crucihimalaya wallichii (Rock-cress).